A 190-amino-acid chain; its full sequence is Imidazoleglycerol-phosphate dehydratase (190 aa).

It belongs to the imidazoleglycerol-phosphate dehydratase family.

Its subcellular location is the cytoplasm. The catalysed reaction is D-erythro-1-(imidazol-4-yl)glycerol 3-phosphate = 3-(imidazol-4-yl)-2-oxopropyl phosphate + H2O. The protein operates within amino-acid biosynthesis; L-histidine biosynthesis; L-histidine from 5-phospho-alpha-D-ribose 1-diphosphate: step 6/9. The sequence is that of Imidazoleglycerol-phosphate dehydratase from Methanococcus maripaludis (strain DSM 14266 / JCM 13030 / NBRC 101832 / S2 / LL).